A 103-amino-acid polypeptide reads, in one-letter code: Small ribosomal subunit protein uS10 (103 aa).

It belongs to the universal ribosomal protein uS10 family. Part of the 30S ribosomal subunit.

Functionally, involved in the binding of tRNA to the ribosomes. This is Small ribosomal subunit protein uS10 from Korarchaeum cryptofilum (strain OPF8).